Here is a 49-residue protein sequence, read N- to C-terminus: Large ribosomal subunit protein eL40 (49 aa).

The protein belongs to the eukaryotic ribosomal protein eL40 family.

The sequence is that of Large ribosomal subunit protein eL40 from Haloquadratum walsbyi (strain DSM 16790 / HBSQ001).